The primary structure comprises 150 residues: SsrA-binding protein (150 aa).

Belongs to the SmpB family.

It is found in the cytoplasm. In terms of biological role, required for rescue of stalled ribosomes mediated by trans-translation. Binds to transfer-messenger RNA (tmRNA), required for stable association of tmRNA with ribosomes. tmRNA and SmpB together mimic tRNA shape, replacing the anticodon stem-loop with SmpB. tmRNA is encoded by the ssrA gene; the 2 termini fold to resemble tRNA(Ala) and it encodes a 'tag peptide', a short internal open reading frame. During trans-translation Ala-aminoacylated tmRNA acts like a tRNA, entering the A-site of stalled ribosomes, displacing the stalled mRNA. The ribosome then switches to translate the ORF on the tmRNA; the nascent peptide is terminated with the 'tag peptide' encoded by the tmRNA and targeted for degradation. The ribosome is freed to recommence translation, which seems to be the essential function of trans-translation. The polypeptide is SsrA-binding protein (Borrelia garinii subsp. bavariensis (strain ATCC BAA-2496 / DSM 23469 / PBi) (Borreliella bavariensis)).